Reading from the N-terminus, the 249-residue chain is ATP synthase subunit a (249 aa).

A run of 6 helical transmembrane segments spans residues 26-46, 84-104, 114-134, 143-163, 185-205, and 208-228; these read FTNV…FLYL, FFPF…IGLF, IIVT…YGFF, LFVP…IEII, ITLK…ALGI, and TVLP…VAFL.

It belongs to the ATPase A chain family. In terms of assembly, F-type ATPases have 2 components, CF(1) - the catalytic core - and CF(0) - the membrane proton channel. CF(1) has five subunits: alpha(3), beta(3), gamma(1), delta(1), epsilon(1). CF(0) has three main subunits: a(1), b(2) and c(9-12). The alpha and beta chains form an alternating ring which encloses part of the gamma chain. CF(1) is attached to CF(0) by a central stalk formed by the gamma and epsilon chains, while a peripheral stalk is formed by the delta and b chains.

The protein localises to the cell inner membrane. Its function is as follows. Key component of the proton channel; it plays a direct role in the translocation of protons across the membrane. The protein is ATP synthase subunit a of Brucella ovis (strain ATCC 25840 / 63/290 / NCTC 10512).